We begin with the raw amino-acid sequence, 351 residues long: MQIASSPFTHNQRSTRRIMLLVILACIPGIIAQTYFFGYGSLIQVMLAMITALLAEGAVLQLRKQPVMARLQDNSALLTALLLGISLPPLAPWWMIVLGTLFAIVIAKQLYGGLGQNPFNPAMVGYVVLLISFPVQMTSWLPPLPLQGTSVGFYDSLLTIFTGYTHSGENIHQLQVGYDGISQATPLDTFKTSLRSQPADQILQQPIFGGVLAGLGWQWVNLGFLVGGLLLLWRKAIHWHIPVSFLLALGGCAAVSWMIAPQSFASPMLHLFSGATMLGAFFIATDPVSASTTPRGRLIFGALIGILVWLIRVYGGYPDGVAFAVLLANITVPLIDHYTQPRVYGHKSGHK.

Helical transmembrane passes span 18–38, 40–60, 87–107, and 121–141; these read IMLLVILACIPGIIAQTYFFG, GSLIQVMLAMITALLAEGAVL, LPPLAPWWMIVLGTLFAIVIA, and PAMVGYVVLLISFPVQMTSWL. At Thr185 the chain carries FMN phosphoryl threonine. The next 5 membrane-spanning stretches (helical) occupy residues 211–231, 241–261, 264–284, 298–318, and 320–340; these read VLAGLGWQWVNLGFLVGGLLL, IPVSFLLALGGCAAVSWMIAP, FASPMLHLFSGATMLGAFFIA, LIFGALIGILVWLIRVYGGYP, and GVAFAVLLANITVPLIDHYTQ.

The protein belongs to the NqrB/RnfD family. In terms of assembly, the complex is composed of six subunits: RnfA, RnfB, RnfC, RnfD, RnfE and RnfG. The cofactor is FMN.

The protein localises to the cell inner membrane. Its function is as follows. Part of a membrane-bound complex that couples electron transfer with translocation of ions across the membrane. This Yersinia pseudotuberculosis serotype O:1b (strain IP 31758) protein is Ion-translocating oxidoreductase complex subunit D.